Here is a 242-residue protein sequence, read N- to C-terminus: ATP synthase subunit a (242 aa).

5 consecutive transmembrane segments (helical) span residues leucine 21 to cysteine 41, alanine 83 to valine 103, alanine 118 to isoleucine 137, leucine 175 to glutamate 195, and alanine 198 to valine 218.

Belongs to the ATPase A chain family. In terms of assembly, F-type ATPases have 2 components, CF(1) - the catalytic core - and CF(0) - the membrane proton channel. CF(1) has five subunits: alpha(3), beta(3), gamma(1), delta(1), epsilon(1). CF(0) has three main subunits: a(1), b(2) and c(9-12). The alpha and beta chains form an alternating ring which encloses part of the gamma chain. CF(1) is attached to CF(0) by a central stalk formed by the gamma and epsilon chains, while a peripheral stalk is formed by the delta and b chains.

Its subcellular location is the cell membrane. In terms of biological role, key component of the proton channel; it plays a direct role in the translocation of protons across the membrane. The protein is ATP synthase subunit a of Staphylococcus epidermidis (strain ATCC 35984 / DSM 28319 / BCRC 17069 / CCUG 31568 / BM 3577 / RP62A).